A 370-amino-acid polypeptide reads, in one-letter code: Vasopressin V2 receptor (370 aa).

Residues 1–10 (MLLASTTSAV) are compositionally biased toward polar residues. The tract at residues 1–26 (MLLASTTSAVPRTLSPPTPAGNGSRE) is disordered. The Extracellular segment spans residues 1–37 (MLLASTTSAVPRTLSPPTPAGNGSRELLDTRDPLLVQ). N-linked (GlcNAc...) asparagine glycosylation occurs at Asn-22. The helical transmembrane segment at 38-62 (AELALLSTVFVAVALSNGLVLGALA) threads the bilayer. Over 63 to 76 (RRVRRGRWAPMHVF) the chain is Cytoplasmic. A helical membrane pass occupies residues 77–97 (IGHLCLADLAVALFQVLPQLA). Over 98–112 (WDATDRFRGPDALCR) the chain is Extracellular. Residues 113–134 (AVKYLQMVGMYASSYMILAMTL) traverse the membrane as a helical segment. The Cytoplasmic segment spans residues 135-158 (DRHRAICRPMLAYRHGGGARWNRP). Residues 159-179 (VLVAWAFSLILSLPQLFIFAQ) form a helical membrane-spanning segment. Residues 180-199 (RDVGNGSGVLDCWAHFAEPW) lie on the Extracellular side of the membrane. The helical transmembrane segment at 200-219 (GLRAYVTWIALMVFVAPALG) threads the bilayer. The Cytoplasmic segment spans residues 220–270 (IAACQVLIFREIHSSLVPGPAERAGGCRGGHRTGSPSEGARVSAAMAKTVR). The helical transmembrane segment at 271 to 292 (MTLVIVIVYVLCWAPFFLVQLW) threads the bilayer. Over 293-307 (AAWDPQAPLEGAPFV) the chain is Extracellular. The helical transmembrane segment at 308 to 327 (LLMLLASLNSCTNPWIYAFF) threads the bilayer. Over 328–370 (SSSVSSELRSLFCWARSRAPPSLGPQEESCATASSFLAKDTSS) the chain is Cytoplasmic. Cys-340 is lipidated: S-palmitoyl cysteine.

This sequence belongs to the G-protein coupled receptor 1 family. Vasopressin/oxytocin receptor subfamily. As to quaternary structure, interacts with ARRDC4. Identified in a complex containing at least ARRDC4, V2R and HGS. Interacts with TMEM147.

Its subcellular location is the cell membrane. In terms of biological role, receptor for arginine vasopressin. The activity of this receptor is mediated by G proteins which activate adenylate cyclase. Involved in renal water reabsorption. This chain is Vasopressin V2 receptor (AVPR2), found in Canis lupus familiaris (Dog).